Consider the following 180-residue polypeptide: Pro-glucagon (180 aa).

Residues 1 to 20 (MKSVYFVAGLFIMLAQGSWQ) form the signal peptide. The segment at 23–58 (LQDTEEKPRSVSASQTDMLDDPDQMNEDKRHSQGTF) is disordered. Phosphoserine is present on S54. Positions 84–89 (NRNNIA) are excised as a propeptide. Phosphoserine occurs at positions 105 and 108. R127 is modified (arginine amide). A propeptide spanning residues 131 to 145 (DFPEEVAIVEELGRR) is cleaved from the precursor. S150 and S152 each carry phosphoserine.

Belongs to the glucagon family. Proglucagon is post-translationally processed in a tissue-specific manner in pancreatic A cells and intestinal L cells. In pancreatic A cells, the major bioactive hormone is glucagon cleaved by PCSK2/PC2. In the intestinal L cells PCSK1/PC1 liberates GLP-1, GLP-2, glicentin and oxyntomodulin. GLP-1 is further N-terminally truncated by post-translational processing in the intestinal L cells resulting in GLP-1(7-37) GLP-1-(7-36)amide. The C-terminal amidation is neither important for the metabolism of GLP-1 nor for its effects on the endocrine pancreas.

The protein localises to the secreted. Functionally, plays a key role in glucose metabolism and homeostasis. Regulates blood glucose by increasing gluconeogenesis and decreasing glycolysis. A counterregulatory hormone of insulin, raises plasma glucose levels in response to insulin-induced hypoglycemia. Plays an important role in initiating and maintaining hyperglycemic conditions in diabetes. Its function is as follows. Potent stimulator of glucose-dependent insulin release. Also stimulates insulin release in response to IL6. Plays important roles on gastric motility and the suppression of plasma glucagon levels. May be involved in the suppression of satiety and stimulation of glucose disposal in peripheral tissues, independent of the actions of insulin. Has growth-promoting activities on intestinal epithelium. May also regulate the hypothalamic pituitary axis (HPA) via effects on LH, TSH, CRH, oxytocin, and vasopressin secretion. Increases islet mass through stimulation of islet neogenesis and pancreatic beta cell proliferation. Inhibits beta cell apoptosis. In terms of biological role, stimulates intestinal growth and up-regulates villus height in the small intestine, concomitant with increased crypt cell proliferation and decreased enterocyte apoptosis. The gastrointestinal tract, from the stomach to the colon is the principal target for GLP-2 action. Plays a key role in nutrient homeostasis, enhancing nutrient assimilation through enhanced gastrointestinal function, as well as increasing nutrient disposal. Stimulates intestinal glucose transport and decreases mucosal permeability. Significantly reduces food intake. Inhibits gastric emptying in humans. Suppression of gastric emptying may lead to increased gastric distension, which may contribute to satiety by causing a sensation of fullness. Functionally, may modulate gastric acid secretion and the gastro-pyloro-duodenal activity. May play an important role in intestinal mucosal growth in the early period of life. The protein is Pro-glucagon (GCG) of Cavia porcellus (Guinea pig).